Consider the following 466-residue polypeptide: Phage-like element PBSX protein XkdK (466 aa).

It belongs to the myoviridae tail sheath protein family.

The chain is Phage-like element PBSX protein XkdK (xkdK) from Bacillus subtilis (strain 168).